We begin with the raw amino-acid sequence, 198 residues long: MKNPPALEQLISALKVLPGVGPKTAQRMAFHLLQRDKQGADKLARALDRALTQLTHCQRCNTFSEAELCAICADETRRRDQLCIVEMPADLMMLEQAKCFDGLYFVLMGRISPLDNIGPKDLHLDKLLARALDGQVSEIVIATNFTAEGEVTSHMLSELFKERGLTVTRIARGMPVGGELEYVDLGTLAQAVYERRGV.

Residues 57-72 (CQRCNTFSEAELCAIC) form a C4-type zinc finger. The region spanning 80 to 175 (DQLCIVEMPA…TVTRIARGMP (96 aa)) is the Toprim domain.

It belongs to the RecR family.

Functionally, may play a role in DNA repair. It seems to be involved in an RecBC-independent recombinational process of DNA repair. It may act with RecF and RecO. In Chromobacterium violaceum (strain ATCC 12472 / DSM 30191 / JCM 1249 / CCUG 213 / NBRC 12614 / NCIMB 9131 / NCTC 9757 / MK), this protein is Recombination protein RecR.